The chain runs to 180 residues: uncharacterized protein (180 aa).

The N-terminal stretch at 1–22 is a signal peptide; the sequence is MKLRFISSALAAALFAATGSYA. Residues Cys-41 and Cys-81 are joined by a disulfide bond.

This sequence belongs to the fimbrial protein family.

The protein resides in the fimbrium. This is an uncharacterized protein from Escherichia coli O157:H7.